A 290-amino-acid chain; its full sequence is HTH-type transcriptional regulator BsdA (290 aa).

Residues 1–59 (MDIRQLRYFITIAQEQKITSAAKKLHMAQPPLSRQLKQLEDELGVVLFDRNKKKQMTLT) enclose the HTH lysR-type domain. A DNA-binding region (H-T-H motif) is located at residues 18–37 (ITSAAKKLHMAQPPLSRQLK).

Belongs to the LysR transcriptional regulatory family.

Its function is as follows. Could be a positive regulator of bsdBCD expression in response to salicylic acid. The protein is HTH-type transcriptional regulator BsdA (bsdA) of Bacillus subtilis (strain 168).